The chain runs to 59 residues: UPF0391 membrane protein Geob_0344 (59 aa).

Helical transmembrane passes span 4–24 (WAAIFFIIAIVAAVFGFTGIA) and 33–53 (FLFILFLVVALIMLILGITAG).

The protein belongs to the UPF0391 family.

The protein resides in the cell membrane. This chain is UPF0391 membrane protein Geob_0344, found in Geotalea daltonii (strain DSM 22248 / JCM 15807 / FRC-32) (Geobacter daltonii).